Consider the following 282-residue polypeptide: Protoheme IX farnesyltransferase (282 aa).

9 helical membrane passes run 9-29 (LAKP…FLLA), 39-59 (LPLF…GCVF), 79-99 (LVTG…LLIL), 102-122 (LVLY…GFIV), 139-159 (VLGG…VVNI), 165-185 (LALF…IAML), 210-230 (IMLF…VLGS), 231-251 (ADLF…YKSI), and 261-281 (VFAK…CLTM).

This sequence belongs to the UbiA prenyltransferase family. Protoheme IX farnesyltransferase subfamily.

The protein localises to the cell inner membrane. It catalyses the reaction heme b + (2E,6E)-farnesyl diphosphate + H2O = Fe(II)-heme o + diphosphate. Its pathway is porphyrin-containing compound metabolism; heme O biosynthesis; heme O from protoheme: step 1/1. Its function is as follows. Converts heme B (protoheme IX) to heme O by substitution of the vinyl group on carbon 2 of heme B porphyrin ring with a hydroxyethyl farnesyl side group. This is Protoheme IX farnesyltransferase from Francisella tularensis subsp. holarctica (strain FTNF002-00 / FTA).